The following is a 175-amino-acid chain: uncharacterized protein (175 aa).

This is an uncharacterized protein from Methanocaldococcus jannaschii (strain ATCC 43067 / DSM 2661 / JAL-1 / JCM 10045 / NBRC 100440) (Methanococcus jannaschii).